Reading from the N-terminus, the 117-residue chain is MLKEFKEFALKGNVLDLAVAVVMGAAFNKIVTALVSYIIMPLIGLIFGTVDFAESWSFMGIKYGMFVQSIIDFIIIAFALFIFVKIANTLMKKEEEEEIEENTVLLTEIRDLLREKN.

3 helical membrane-spanning segments follow: residues 7–27 (EFAL…GAAF), 30–50 (IVTA…FGTV), and 64–84 (GMFV…FIFV).

This sequence belongs to the MscL family. As to quaternary structure, homopentamer.

It localises to the cell membrane. Channel that opens in response to stretch forces in the membrane lipid bilayer. May participate in the regulation of osmotic pressure changes within the cell. This Staphylococcus saprophyticus subsp. saprophyticus (strain ATCC 15305 / DSM 20229 / NCIMB 8711 / NCTC 7292 / S-41) protein is Large-conductance mechanosensitive channel.